The following is a 143-amino-acid chain: Large ribosomal subunit protein uL11 (143 aa).

Belongs to the universal ribosomal protein uL11 family. In terms of assembly, part of the ribosomal stalk of the 50S ribosomal subunit. Interacts with L10 and the large rRNA to form the base of the stalk. L10 forms an elongated spine to which L12 dimers bind in a sequential fashion forming a multimeric L10(L12)X complex. Post-translationally, one or more lysine residues are methylated.

Functionally, forms part of the ribosomal stalk which helps the ribosome interact with GTP-bound translation factors. This chain is Large ribosomal subunit protein uL11, found in Clavibacter michiganensis subsp. michiganensis (strain NCPPB 382).